Consider the following 393-residue polypeptide: MCGPRNAEAVSWRSWLIEVCGFALAALTLVLTLIFASLPEMGFPCFYATVADYDTLNDTSGGVWTRQPLVAPALFLETPTVTSFFGFTATVLLAHALYAVAGAVVLRREAGRLAFQPSVVLYAASTVAAPGTLMLGALCAWTLQAVVLLMAHKQAGLAAAAYITHFVFLALFGACHACKGTGDVRAALAASPPLRRVAVHARAVVTNVVLGAVGLGAAVVGLMLGVLLANSFHISLWKTAEAALAVFTLLALALMVFVEVVVSGYVQVLPTPAFCVLVASAAFGVSAHRYFAKFSEALGETHGVVIGTRAVLAVLSLIALAMIVVRLVRACIAHRARGSRFYANVDKARTTARRYLQKRLHGRGNDEYLLAPGSGDDEFDDGDEVVYENLGFE.

Residues 1-14 (MCGPRNAEAVSWRS) lie on the Intravirion side of the membrane. The helical transmembrane segment at 15–35 (WLIEVCGFALAALTLVLTLIF) threads the bilayer. The Virion surface segment spans residues 36–83 (ASLPEMGFPCFYATVADYDTLNDTSGGVWTRQPLVAPALFLETPTVTS). A helical transmembrane segment spans residues 84–104 (FFGFTATVLLAHALYAVAGAV). Over 105 to 130 (VLRREAGRLAFQPSVVLYAASTVAAP) the chain is Intravirion. Residues 131–151 (GTLMLGALCAWTLQAVVLLMA) traverse the membrane as a helical segment. Residues 152–154 (HKQ) lie on the Virion surface side of the membrane. Residues 155-175 (AGLAAAAYITHFVFLALFGAC) traverse the membrane as a helical segment. Topologically, residues 176-207 (HACKGTGDVRAALAASPPLRRVAVHARAVVTN) are intravirion. Residues 208–228 (VVLGAVGLGAAVVGLMLGVLL) traverse the membrane as a helical segment. The Virion surface portion of the chain corresponds to 229–241 (ANSFHISLWKTAE). The chain crosses the membrane as a helical span at residues 242 to 262 (AALAVFTLLALALMVFVEVVV). At 263–264 (SG) the chain is on the intravirion side. The chain crosses the membrane as a helical span at residues 265–285 (YVQVLPTPAFCVLVASAAFGV). Topologically, residues 286 to 303 (SAHRYFAKFSEALGETHG) are virion surface. The chain crosses the membrane as a helical span at residues 304–324 (VVIGTRAVLAVLSLIALAMIV). The Intravirion segment spans residues 325-393 (VRLVRACIAH…EVVYENLGFE (69 aa)).

The protein belongs to the herpesviridae glycoprotein M family. In terms of assembly, interacts (via N-terminus) with gN (via N-terminus). The gM-gN heterodimer forms the gCII complex.

It is found in the virion membrane. The protein localises to the host Golgi apparatus. It localises to the host trans-Golgi network. Its subcellular location is the host endosome membrane. The protein resides in the host nucleus inner membrane. Its function is as follows. Envelope glycoprotein important for virion assembly and egress. Plays a role in the correct incorporation of gH-gL into virion membrane. Directs the glycoprotein N (gN) to the host trans-Golgi network. The sequence is that of Envelope glycoprotein M from Suid herpesvirus 1 (SuHV-1).